The sequence spans 427 residues: NADH-quinone oxidoreductase subunit 14 (427 aa).

The next 14 membrane-spanning stretches (helical) occupy residues 1-21, 30-50, 57-77, 79-99, 104-124, 137-157, 172-192, 204-224, 230-250, 257-277, 280-300, 322-342, 360-380, and 400-420; these read MTLA…FVLP, LLGL…PFAF, GVSQ…VGLV, SGRF…HLLA, LLLM…LATW, FLLG…FYGA, YALA…LAPF, PTPV…AALL, PEAL…AALA, LLAY…YTGN, ALGF…AVLS, LGLA…LAGF, VLVL…GLGL, and AAVV…GLVL.

It belongs to the complex I subunit 2 family. As to quaternary structure, NDH-1 is composed of 15 different subunits, Nqo1 to Nqo15. The complex has a L-shaped structure, with the hydrophobic arm (subunits Nqo7, Nqo8 and Nqo10 to Nqo14) embedded in the membrane and the hydrophilic peripheral arm (subunits Nqo1 to Nqo6, Nqo9 and Nqo15) protruding into the bacterial cytoplasm. The hydrophilic domain contains all the redox centers.

Its subcellular location is the cell inner membrane. The enzyme catalyses a quinone + NADH + 5 H(+)(in) = a quinol + NAD(+) + 4 H(+)(out). Functionally, NDH-1 shuttles electrons from NADH, via FMN and iron-sulfur (Fe-S) centers, to quinones in the respiratory chain. The immediate electron acceptor for the enzyme in this species is menaquinone. Couples the redox reaction to proton translocation (for every two electrons transferred, four hydrogen ions are translocated across the cytoplasmic membrane), and thus conserves the redox energy in a proton gradient required for the synthesis of ATP. The polypeptide is NADH-quinone oxidoreductase subunit 14 (nqo14) (Thermus thermophilus (strain ATCC 27634 / DSM 579 / HB8)).